The chain runs to 324 residues: D-alanine--D-alanine ligase (324 aa).

The 201-residue stretch at 121 to 321 folds into the ATP-grasp domain; the sequence is NQYLKAFGVR…IKDVMTDIIE (201 aa). 149–204 serves as a coordination point for ATP; the sequence is VEKIGLPCFIKPNLGGSSFGVTKVKTREQIQPAIAKAFSEAEEVMIEAFMGGTELT. Mg(2+)-binding residues include D275, E288, and N290.

It belongs to the D-alanine--D-alanine ligase family. It depends on Mg(2+) as a cofactor. The cofactor is Mn(2+).

The protein localises to the cytoplasm. The enzyme catalyses 2 D-alanine + ATP = D-alanyl-D-alanine + ADP + phosphate + H(+). Its pathway is cell wall biogenesis; peptidoglycan biosynthesis. In terms of biological role, cell wall formation. The chain is D-alanine--D-alanine ligase from Bacteroides fragilis (strain YCH46).